A 163-amino-acid chain; its full sequence is Epithelial membrane protein 3 (163 aa).

The helical transmembrane segment at 4–24 threads the bilayer; sequence LLLVVSALHILILVLLFVATL. N-linked (GlcNAc...) asparagine glycans are attached at residues asparagine 46 and asparagine 56. 3 helical membrane-spanning segments follow: residues 66–86, 100–120, and 139–159; these read VQALMVLSLILCCLSFILFMI, TGLCQLCTSAAVFSGALIYAI, and FALAWVAFPLALVSGIIYIHL.

The protein belongs to the PMP-22/EMP/MP20 family.

It localises to the membrane. Its function is as follows. Probably involved in cell proliferation and cell-cell interactions. The polypeptide is Epithelial membrane protein 3 (Emp3) (Rattus norvegicus (Rat)).